A 373-amino-acid chain; its full sequence is Glycerol-3-phosphate dehydrogenase [NAD(+)] 2 (373 aa).

Ser15 is subject to Phosphoserine. NAD(+) contacts are provided by residues 31-36 (GSGNWG), Phe123, Lys146, and Ala179. Lys146 contacts substrate. Lys236 (proton acceptor) is an active-site residue. 2 residues coordinate NAD(+): Arg300 and Gln329. 300-301 (RN) serves as a coordination point for substrate.

This sequence belongs to the NAD-dependent glycerol-3-phosphate dehydrogenase family.

It localises to the cytoplasm. It carries out the reaction sn-glycerol 3-phosphate + NAD(+) = dihydroxyacetone phosphate + NADH + H(+). This Schizosaccharomyces pombe (strain 972 / ATCC 24843) (Fission yeast) protein is Glycerol-3-phosphate dehydrogenase [NAD(+)] 2 (gpd2).